The following is a 189-amino-acid chain: MNIKTIKIVTIGDYGVGKTTLLMTYTASGSFPQEYVPTALDNFIHEATINGKKASLSIWDTAGGEYYHELRPLIYPETDILLLLFAIENRESFLHIKTNWITEINQYIPGIPIILVGTKIDLRDSDLIKDKSNFVKYKEGLALSKEIGASHFCECSSRMNLGLEELFKKVIKLTNNNNNNNNNNKCIIL.

A GTP-binding site is contributed by 12–19; the sequence is GDYGVGKT. The Effector region motif lies at 35–43; it reads YVPTALDNF. Residues 60–64 and 118–121 each bind GTP; these read DTAGG and TKID. Cys186 bears the Cysteine methyl ester mark. Residue Cys186 is the site of S-geranylgeranyl cysteine attachment. A propeptide spans 187 to 189 (removed in mature form); the sequence is IIL.

It belongs to the small GTPase superfamily. Rho family.

It localises to the cell membrane. In Dictyostelium discoideum (Social amoeba), this protein is Rho-related protein racM (racM).